The following is a 233-amino-acid chain: 1-(5-phosphoribosyl)-5-[(5-phosphoribosylamino)methylideneamino] imidazole-4-carboxamide isomerase (233 aa).

The active-site Proton acceptor is the aspartate 8. The active-site Proton donor is aspartate 125.

The protein belongs to the HisA/HisF family.

It is found in the cytoplasm. The enzyme catalyses 1-(5-phospho-beta-D-ribosyl)-5-[(5-phospho-beta-D-ribosylamino)methylideneamino]imidazole-4-carboxamide = 5-[(5-phospho-1-deoxy-D-ribulos-1-ylimino)methylamino]-1-(5-phospho-beta-D-ribosyl)imidazole-4-carboxamide. It participates in amino-acid biosynthesis; L-histidine biosynthesis; L-histidine from 5-phospho-alpha-D-ribose 1-diphosphate: step 4/9. This is 1-(5-phosphoribosyl)-5-[(5-phosphoribosylamino)methylideneamino] imidazole-4-carboxamide isomerase from Thermococcus kodakarensis (strain ATCC BAA-918 / JCM 12380 / KOD1) (Pyrococcus kodakaraensis (strain KOD1)).